Consider the following 178-residue polypeptide: Endoribonuclease YbeY (178 aa).

Residues H118, H122, and H128 each contribute to the Zn(2+) site. The disordered stretch occupies residues 156 to 178 (YQQDRQDERDRRLLDKSRYFDEP). Positions 159-178 (DRQDERDRRLLDKSRYFDEP) are enriched in basic and acidic residues.

This sequence belongs to the endoribonuclease YbeY family. It depends on Zn(2+) as a cofactor.

Its subcellular location is the cytoplasm. In terms of biological role, single strand-specific metallo-endoribonuclease involved in late-stage 70S ribosome quality control and in maturation of the 3' terminus of the 16S rRNA. This Mycobacterium marinum (strain ATCC BAA-535 / M) protein is Endoribonuclease YbeY.